The primary structure comprises 216 residues: Octanoyltransferase (216 aa).

The 176-residue stretch at 32–207 (ENSPDELWLV…TFSQLLGYEH (176 aa)) folds into the BPL/LPL catalytic domain. Residues 71–78 (RGGQVTYH), 138–140 (SLG), and 151–153 (GLA) contribute to the substrate site. Residue Cys169 is the Acyl-thioester intermediate of the active site.

The protein belongs to the LipB family.

It is found in the cytoplasm. It catalyses the reaction octanoyl-[ACP] + L-lysyl-[protein] = N(6)-octanoyl-L-lysyl-[protein] + holo-[ACP] + H(+). Its pathway is protein modification; protein lipoylation via endogenous pathway; protein N(6)-(lipoyl)lysine from octanoyl-[acyl-carrier-protein]: step 1/2. Its function is as follows. Catalyzes the transfer of endogenously produced octanoic acid from octanoyl-acyl-carrier-protein onto the lipoyl domains of lipoate-dependent enzymes. Lipoyl-ACP can also act as a substrate although octanoyl-ACP is likely to be the physiological substrate. In Shewanella amazonensis (strain ATCC BAA-1098 / SB2B), this protein is Octanoyltransferase.